Here is a 227-residue protein sequence, read N- to C-terminus: 7-cyano-7-deazaguanine synthase (227 aa).

8–18 (FSGGQDSTTCL) serves as a coordination point for ATP. Zn(2+) contacts are provided by Cys187, Cys196, Cys199, and Cys202.

It belongs to the QueC family. It depends on Zn(2+) as a cofactor.

It catalyses the reaction 7-carboxy-7-deazaguanine + NH4(+) + ATP = 7-cyano-7-deazaguanine + ADP + phosphate + H2O + H(+). Its pathway is purine metabolism; 7-cyano-7-deazaguanine biosynthesis. In terms of biological role, catalyzes the ATP-dependent conversion of 7-carboxy-7-deazaguanine (CDG) to 7-cyano-7-deazaguanine (preQ(0)). The polypeptide is 7-cyano-7-deazaguanine synthase (Aliivibrio fischeri (strain ATCC 700601 / ES114) (Vibrio fischeri)).